We begin with the raw amino-acid sequence, 451 residues long: Chromosomal replication initiator protein DnaA 2 (451 aa).

The domain I, interacts with DnaA modulators stretch occupies residues 1-68 (MQAWEEFLKA…QQKFINGNNK (68 aa)). Residues 68-104 (KRIKIHLSVANTPQRAKKTKTANKEKDFKAPFELTFD) are domain II. The segment at 105–326 (ELDPLCLFPY…KGLEALVLRL (222 aa)) is domain III, AAA+ region. Glycine 156, glycine 158, lysine 159, and threonine 160 together coordinate ATP. Residues 327 to 451 (HLDAKHSITA…CHIILKKLQG (125 aa)) form a domain IV, binds dsDNA region.

Belongs to the DnaA family. In terms of assembly, oligomerizes as a right-handed, spiral filament on DNA at oriC.

It is found in the cytoplasm. In terms of biological role, plays an essential role in the initiation and regulation of chromosomal replication. ATP-DnaA binds to the origin of replication (oriC) to initiate formation of the DNA replication initiation complex once per cell cycle. Binds the DnaA box (a 9 base pair repeat at the origin) and separates the double-stranded (ds)DNA. Forms a right-handed helical filament on oriC DNA; dsDNA binds to the exterior of the filament while single-stranded (ss)DNA is stabiized in the filament's interior. The ATP-DnaA-oriC complex binds and stabilizes one strand of the AT-rich DNA unwinding element (DUE), permitting loading of DNA polymerase. After initiation quickly degrades to an ADP-DnaA complex that is not apt for DNA replication. Binds acidic phospholipids. The protein is Chromosomal replication initiator protein DnaA 2 of Protochlamydia amoebophila (strain UWE25).